The primary structure comprises 355 residues: MRTWKMRKDGQRIDYLGRKWRNLGGPFMEVSRVVTWIIIITLVALAIKTILPFFSPLFFAFITAYALYPLHIKLKERIGSKNSAILLTLFLLLGALMILLILVYTLTPVIGQAYDYLTNLEKIKINIPLVPKSVISSLEGVIDEFIERGKGYLVSLTFSVPKYLLQVIVYLTFVYFFLVKEKEARELITFEDEKLIRIIERGNLTLQALIRVWLLLNIVKGILMTLGFLIFKVSNLPTAILAGLLTVLFSFIPLFEGWMIWLAGAFYLVKQGHIIAGIGLAVYGFTLVSPLPDFTIRPKLVAREAEFNDVLVLIGMIGGTWGLGLKGLIIGPIVLNVAIEMLREWKNVQAKTERS.

8 helical membrane-spanning segments follow: residues 34–54 (VTWIIIITLVALAIKTILPFF), 55–75 (SPLFFAFITAYALYPLHIKLK), 84–104 (AILLTLFLLLGALMILLILVY), 158–178 (FSVPKYLLQVIVYLTFVYFFL), 212–232 (VWLLLNIVKGILMTLGFLIFK), 240–260 (ILAGLLTVLFSFIPLFEGWMI), 274–294 (IIAGIGLAVYGFTLVSPLPDF), and 310–330 (VLVLIGMIGGTWGLGLKGLII).

This sequence belongs to the autoinducer-2 exporter (AI-2E) (TC 2.A.86) family.

It localises to the cell membrane. The chain is Putative transport protein PH1000 from Pyrococcus horikoshii (strain ATCC 700860 / DSM 12428 / JCM 9974 / NBRC 100139 / OT-3).